Consider the following 369-residue polypeptide: Queuine tRNA-ribosyltransferase (369 aa).

The active-site Proton acceptor is D89. Substrate-binding positions include 89-93 (DSGGF), D142, Q184, and G211. The tract at residues 242–248 (GGGSPEL) is RNA binding. D261 (nucleophile) is an active-site residue. Residues 266-270 (TRIAR) form an RNA binding; important for wobble base 34 recognition region. Positions 299, 301, 304, and 330 each coordinate Zn(2+).

This sequence belongs to the queuine tRNA-ribosyltransferase family. In terms of assembly, homodimer. Within each dimer, one monomer is responsible for RNA recognition and catalysis, while the other monomer binds to the replacement base PreQ1. The cofactor is Zn(2+).

The catalysed reaction is 7-aminomethyl-7-carbaguanine + guanosine(34) in tRNA = 7-aminomethyl-7-carbaguanosine(34) in tRNA + guanine. Its pathway is tRNA modification; tRNA-queuosine biosynthesis. Catalyzes the base-exchange of a guanine (G) residue with the queuine precursor 7-aminomethyl-7-deazaguanine (PreQ1) at position 34 (anticodon wobble position) in tRNAs with GU(N) anticodons (tRNA-Asp, -Asn, -His and -Tyr). Catalysis occurs through a double-displacement mechanism. The nucleophile active site attacks the C1' of nucleotide 34 to detach the guanine base from the RNA, forming a covalent enzyme-RNA intermediate. The proton acceptor active site deprotonates the incoming PreQ1, allowing a nucleophilic attack on the C1' of the ribose to form the product. After dissociation, two additional enzymatic reactions on the tRNA convert PreQ1 to queuine (Q), resulting in the hypermodified nucleoside queuosine (7-(((4,5-cis-dihydroxy-2-cyclopenten-1-yl)amino)methyl)-7-deazaguanosine). The chain is Queuine tRNA-ribosyltransferase from Thermotoga neapolitana (strain ATCC 49049 / DSM 4359 / NBRC 107923 / NS-E).